The sequence spans 246 residues: Proteasome subunit alpha (246 aa).

This sequence belongs to the peptidase T1A family. In terms of assembly, the 20S proteasome core is composed of 14 alpha and 14 beta subunits that assemble into four stacked heptameric rings, resulting in a barrel-shaped structure. The two inner rings, each composed of seven catalytic beta subunits, are sandwiched by two outer rings, each composed of seven alpha subunits. The catalytic chamber with the active sites is on the inside of the barrel. Has probably a gated structure, the ends of the cylinder being occluded by the N-termini of the alpha-subunits. Is likely capped at one or both ends by the proteasome regulatory ATPase, PAN.

The protein localises to the cytoplasm. Its activity is regulated as follows. The formation of the proteasomal ATPase PAN-20S proteasome complex, via the docking of the C-termini of PAN into the intersubunit pockets in the alpha-rings, triggers opening of the gate for substrate entry. Interconversion between the open-gate and close-gate conformations leads to a dynamic regulation of the 20S proteasome proteolysis activity. Its function is as follows. Component of the proteasome core, a large protease complex with broad specificity involved in protein degradation. This is Proteasome subunit alpha from Archaeoglobus fulgidus (strain ATCC 49558 / DSM 4304 / JCM 9628 / NBRC 100126 / VC-16).